A 409-amino-acid chain; its full sequence is Ubiquitin-associated domain-containing protein 1 (409 aa).

Met1 is subject to N-acetylmethionine. One can recognise a Ubiquitin-like domain in the interval 14-98 (LRLHICAADG…LLLIKKRAPS (85 aa)). Residues 187-231 (DEDERVDETALRQLTEMGFPESRASKALRLNHMSVPQAMEWLIEH) form the UBA 1 domain. Residues 235 to 273 (PAIDTPLPGHAAQAEASAAAATSSSSSEAAVGTSVEDEE) are disordered. Residues 245 to 264 (AAQAEASAAAATSSSSSEAA) are compositionally biased toward low complexity. The UBA 2 domain maps to 292-332 (RADARAVISLMEMGFDEKEVIDALRVNNNQQNAACEWLLGD). The STI1 domain occupies 357-396 (NPVVQLGLTNPKTLLAFEDMLENPLNSTQWMNDPETGPVM).

In terms of assembly, component of the KPC complex composed of RNF123/KPC1 and UBAC1/KPC2. Interacts (via ubiquitin-like domain) with RNF123. Interacts (via ubiquitin-like and UBA domains) with the proteasome via its N-terminal domain.

Its subcellular location is the cytoplasm. Its pathway is protein modification; protein ubiquitination. Non-catalytic component of the KPC complex, a E3 ubiquitin-protein ligase complex that mediates polyubiquitination of target proteins, such as CDKN1B and NFKB1. The KPC complex catalyzes polyubiquitination and proteasome-mediated degradation of CDKN1B during G1 phase of the cell cycle. The KPC complex also acts as a key regulator of the NF-kappa-B signaling by promoting maturation of the NFKB1 component of NF-kappa-B by catalyzing ubiquitination of the NFKB1 p105 precursor. Within the KPC complex, UBAC1 acts as an adapter that promotes the transfer of target proteins that have been polyubiquitinated by RNF123/KPC1 to the 26S proteasome. The polypeptide is Ubiquitin-associated domain-containing protein 1 (Ubac1) (Rattus norvegicus (Rat)).